The sequence spans 153 residues: MVVKAVCVINGDAKGTVFFEQESSETPVKVSGEVCGLAKGLHGFHVHEFGDNTNGCMSSGPHFNPYGKEHGAPVDENRHLGDLGNIEATGDCPTKVSITDSKITLFGADSIIGRTVVVHADADDLGKGGHELSKSTGNAGARIGCGVIGIAKV.

Cu cation-binding residues include histidine 45, histidine 47, and histidine 62. Cysteine 56 and cysteine 145 are disulfide-bonded. Histidine 62, histidine 70, histidine 79, and aspartate 82 together coordinate Zn(2+). Histidine 119 is a binding site for Cu cation.

The protein belongs to the Cu-Zn superoxide dismutase family. Homodimer. The cofactor is Cu cation. Requires Zn(2+) as cofactor.

It localises to the cytoplasm. The enzyme catalyses 2 superoxide + 2 H(+) = H2O2 + O2. In terms of biological role, destroys radicals which are normally produced within the cells and which are toxic to biological systems. In Drosophila yakuba (Fruit fly), this protein is Superoxide dismutase [Cu-Zn].